The following is a 530-amino-acid chain: Testis-expressed protein 44 (530 aa).

The segment covering 1 to 10 (MTAEPLEDPE) has biased composition (acidic residues). 4 disordered regions span residues 1-85 (MTAE…FIRT), 207-233 (ATSA…TSLL), 256-290 (ENNR…QPVL), and 305-384 (QTSV…SPDF). 3 stretches are compositionally biased toward polar residues: residues 11-26 (ASSS…SSDN), 222-233 (GQDNPEETTSLL), and 257-280 (NNRT…TLGN). Positions 365–381 (PPDPPDPGSPGGSPPHS) are enriched in pro residues. S468 bears the Phosphoserine mark.

Its subcellular location is the cytoplasm. In Mus musculus (Mouse), this protein is Testis-expressed protein 44 (Tex44).